The chain runs to 492 residues: KAT8 regulatory NSL complex subunit 2 (492 aa).

Residue Lys78 forms a Glycyl lysine isopeptide (Lys-Gly) (interchain with G-Cter in SUMO2) linkage. Positions 126-182 (ELGSQTPESSRSEASRILDEDSWSDGEQEPITVDQTWRGDPDSEADSIDRDQEDPLK) are disordered. At Thr131 the chain carries Phosphothreonine. Residues 135–144 (SRSEASRILD) are compositionally biased toward basic and acidic residues. A phosphoserine mark is found at Ser147, Ser149, Ser168, and Ser172. The span at 162-182 (WRGDPDSEADSIDRDQEDPLK) shows a compositional bias: basic and acidic residues. The interval 308-364 (DVRCSNQSLPMTRHCLTHICQDTNRVLFKCCQGSEEVPCNKPVPVSLSEDPCCPLHF) is required for interaction with other NSL complex members. The interval 453–492 (QMAGDGCRSQGPRNSEKAPAPLSQSGIATANGKPEPTSVS) is disordered.

In terms of assembly, component of the NSL complex at least composed of KAT8/MOF, KANSL1, KANSL2, KANSL3, MCRS1, PHF20, OGT1/OGT, WDR5 and HCFC1. Ubiquitously expressed.

It is found in the nucleus. The protein resides in the mitochondrion. In terms of biological role, non-catalytic component of the NSL histone acetyltransferase complex, a multiprotein complex that mediates histone H4 acetylation at 'Lys-5'- and 'Lys-8' (H4K5ac and H4K8ac) at transcription start sites and promotes transcription initiation. Required for NSL complex stability and for transcription of intraciliary transport genes in both ciliated and non-ciliated cells by regulating histone H4 acetylation at 'Lys-5'- and 'Lys-12' (H4K5ac and H4K12ac). This is necessary for cilium assembly in ciliated cells and for organization of the microtubule cytoskeleton in non-ciliated cells. Required within the NSL complex to maintain nuclear architecture stability by promoting KAT8-mediated acetylation of lamin LMNA. The protein is KAT8 regulatory NSL complex subunit 2 (KANSL2) of Capra hircus (Goat).